A 352-amino-acid chain; its full sequence is uncharacterized protein (352 aa).

The N-terminal stretch at 1–21 is a signal peptide; it reads MNVDSRVFRFFLVFLILVVVA.

Belongs to the bacterial solute-binding protein 1 family. WtpA subfamily.

This is an uncharacterized protein from Methanosarcina acetivorans (strain ATCC 35395 / DSM 2834 / JCM 12185 / C2A).